The chain runs to 96 residues: Co-chaperonin GroES (96 aa).

Belongs to the GroES chaperonin family. Heptamer of 7 subunits arranged in a ring. Interacts with the chaperonin GroEL.

Its subcellular location is the cytoplasm. Functionally, together with the chaperonin GroEL, plays an essential role in assisting protein folding. The GroEL-GroES system forms a nano-cage that allows encapsulation of the non-native substrate proteins and provides a physical environment optimized to promote and accelerate protein folding. GroES binds to the apical surface of the GroEL ring, thereby capping the opening of the GroEL channel. This chain is Co-chaperonin GroES, found in Actinobacillus pleuropneumoniae serotype 5b (strain L20).